Consider the following 421-residue polypeptide: POU domain, class 4, transcription factor 1 (421 aa).

The POU-IV box motif lies at 57–66 (RAEALAAVDI). 2 disordered regions span residues 94-117 (STVP…GDLL) and 133-200 (GAGA…GLGH). A compositionally biased stretch (basic residues) spans 99 to 108 (AHHHHHHHHH). Positions 133-186 (GAGAAGGGGGAHDGPGGGGGPGGGGGPGGGGPGGGGGGGGPGGGGGGPGGGLLG) are enriched in gly residues. The POU-specific domain occupies 262 to 339 (DSDTDPRELE…ILQAWLEEAE (78 aa)). Positions 357–416 (KKRKRTSIAAPEKRSLEAYFAVQPRPSSEKIAAIAEKLDLKKNVVRVWFCNQRQKQKRMK) form a DNA-binding region, homeobox.

This sequence belongs to the POU transcription factor family. Class-4 subfamily. In terms of assembly, interacts (via N-terminus) with RIT2; the interaction controls POU4F1 transactivation activity on some neuronal target genes. Isoform 1 interacts with POU4F2 isoform 2; this interaction inhibits both POU4F1 DNA-binding and transcriptional activities. Isoform 1 interacts (C-terminus) with ESR1 (via DNA-binding domain); this interaction decreases the estrogen receptor ESR1 transcriptional activity in a DNA- and ligand 17-beta-estradiol-independent manner. Expressed in mature osteoclasts (at protein level). Brain, peripheral sensory nervous system and retina. In the adult nervous system, predominates in the medial habenula, superficial gray of the superior colliculus, red nucleus, mesencephalic nucleus of the trigeminal ganglion, nucleus ambiguus, inferior olivary nucleus, and peripheral sensory ganglia.

The protein localises to the nucleus. The protein resides in the cytoplasm. Its function is as follows. Multifunctional transcription factor with different regions mediating its different effects. Acts by binding (via its C-terminal domain) to sequences related to the consensus octamer motif 5'-ATGCAAAT-3' in the regulatory regions of its target genes. Regulates the expression of specific genes involved in differentiation and survival within a subset of neuronal lineages. It has been shown that activation of some of these genes requires its N-terminal domain, maybe through a neuronal-specific cofactor. Activates BCL2 expression and protects neuronal cells from apoptosis (via the N-terminal domain). Induces neuronal process outgrowth and the coordinate expression of genes encoding synaptic proteins. Exerts its major developmental effects in somatosensory neurons and in brainstem nuclei involved in motor control. Stimulates the binding affinity of the nuclear estrogene receptor ESR1 to DNA estrogen response element (ERE), and hence modulates ESR1-induced transcriptional activity. May positively regulate POU4F2 and POU4F3. Regulates dorsal root ganglion sensory neuron specification and axonal projection into the spinal cord. Plays a role in TNFSF11-mediated terminal osteoclast differentiation. Negatively regulates its own expression interacting directly with a highly conserved autoregulatory domain surrounding the transcription initiation site. In terms of biological role, able to act as transcription factor, cannot regulate the expression of the same subset of genes than isoform 1. Does not have antiapoptotic effect on neuronal cells. The protein is POU domain, class 4, transcription factor 1 (Pou4f1) of Mus musculus (Mouse).